A 117-amino-acid polypeptide reads, in one-letter code: Large ribosomal subunit protein uL24 (117 aa).

Residues 1–12 (MSKKNSQTSPQR) show a composition bias toward polar residues. The tract at residues 1–20 (MSKKNSQTSPQRQKMHVKKG) is disordered.

Belongs to the universal ribosomal protein uL24 family. As to quaternary structure, part of the 50S ribosomal subunit.

Functionally, one of two assembly initiator proteins, it binds directly to the 5'-end of the 23S rRNA, where it nucleates assembly of the 50S subunit. One of the proteins that surrounds the polypeptide exit tunnel on the outside of the subunit. In Microcystis aeruginosa (strain NIES-843 / IAM M-2473), this protein is Large ribosomal subunit protein uL24.